We begin with the raw amino-acid sequence, 294 residues long: Small ribosomal subunit protein uS2 (294 aa).

Belongs to the universal ribosomal protein uS2 family.

The polypeptide is Small ribosomal subunit protein uS2 (rpsB) (Mycoplasma pneumoniae (strain ATCC 29342 / M129 / Subtype 1) (Mycoplasmoides pneumoniae)).